The primary structure comprises 503 residues: Protein phosphatase eya-1 (503 aa).

The active-site Nucleophile is D237. 2 residues coordinate Mg(2+): D237 and D239. D239 serves as the catalytic Proton donor.

This sequence belongs to the HAD-like hydrolase superfamily. EYA family. Interacts (via C-terminus) with ceh-34 (via N-terminus). Mg(2+) is required as a cofactor. Expressed in body wall muscles. Expressed in BAG sensory neurons and in other head neurons.

It localises to the nucleus. It catalyses the reaction O-phospho-L-tyrosyl-[protein] + H2O = L-tyrosyl-[protein] + phosphate. In terms of biological role, tyrosine protein phosphatase. Acts probably as a transcription regulator in the embryonic and postembryonic development of several tissues including pharynx, vulva and gonads. Required for the development of anterior tissues during late embryogenesis. Together with ceh-34, required to specify the coelomocyte fate in embryonic and postembryonic precursors. In the anterior part of the embryo, prevents apoptosis in cells that are not fated to die. Together with ceh-34 activates proapoptotic factor egl-1 expression to promote motor neuron M4 sister cell apoptosis. Also promotes apoptosis of I1 pharyngeal neuron sister cell. Plays a role in locomotion and fertility. May play a role in resistance to heat and oxidative stresses. May cooperate with the transcription factors vab-3 and ceh-32 to repress transcription factor ets-5 expression in non BAG neuronal cells. The polypeptide is Protein phosphatase eya-1 (Caenorhabditis elegans).